The primary structure comprises 378 residues: Ribosomal RNA large subunit methyltransferase G (378 aa).

It belongs to the methyltransferase superfamily. RlmG family.

The protein localises to the cytoplasm. The catalysed reaction is guanosine(1835) in 23S rRNA + S-adenosyl-L-methionine = N(2)-methylguanosine(1835) in 23S rRNA + S-adenosyl-L-homocysteine + H(+). Functionally, specifically methylates the guanine in position 1835 (m2G1835) of 23S rRNA. This is Ribosomal RNA large subunit methyltransferase G from Shewanella baltica (strain OS185).